A 255-amino-acid chain; its full sequence is MLTKRIIPCLDVKDGRVVKGVQFLELRDAGDPVEAAEAYDAQGADELTFLDITASSDKRNIILDVVSRTAERVFMPLTVGGGIRTIEDIRNLLNAGADKVSINTEAVNNPEFVKEAAERFGSQCIVVAIDARRVADSDPQRWEVYIHGGRTPTGIDAMEWAMRMEAYGAGEILLTSMDKDGTKDGYDIPLTRTISDLVSIPVIASGGVGNLEHIHQGLTEGGASAALAASIFHFREYTIHECKEYLQKRGVPARL.

Active-site residues include aspartate 11 and aspartate 130.

It belongs to the HisA/HisF family. Heterodimer of HisH and HisF.

The protein resides in the cytoplasm. It catalyses the reaction 5-[(5-phospho-1-deoxy-D-ribulos-1-ylimino)methylamino]-1-(5-phospho-beta-D-ribosyl)imidazole-4-carboxamide + L-glutamine = D-erythro-1-(imidazol-4-yl)glycerol 3-phosphate + 5-amino-1-(5-phospho-beta-D-ribosyl)imidazole-4-carboxamide + L-glutamate + H(+). Its pathway is amino-acid biosynthesis; L-histidine biosynthesis; L-histidine from 5-phospho-alpha-D-ribose 1-diphosphate: step 5/9. Its function is as follows. IGPS catalyzes the conversion of PRFAR and glutamine to IGP, AICAR and glutamate. The HisF subunit catalyzes the cyclization activity that produces IGP and AICAR from PRFAR using the ammonia provided by the HisH subunit. This Syntrophotalea carbinolica (strain DSM 2380 / NBRC 103641 / GraBd1) (Pelobacter carbinolicus) protein is Imidazole glycerol phosphate synthase subunit HisF.